We begin with the raw amino-acid sequence, 594 residues long: Metastasis-associated protein MTA3 (594 aa).

Residues 1-147 (MAANMYRVGD…PSLKTLLADK (147 aa)) form the BAH domain. The ELM2 domain maps to 148 to 259 (GEIRVGPRYQ…SAISVLVPLG (112 aa)). The SANT domain occupies 266–318 (DEMEEWSASEASLFEEALEKYGKDFNDIRQDFLPWKSLTSIIEYYYMWKTTDR). Residues 379-406 (CESCYATQSHQWYSWGPPNMQCRLCAIC) form a GATA-type; atypical zinc finger. Phosphoserine occurs at positions 428 and 430. Thr455 is modified (phosphothreonine). Residue Ser519 is modified to Phosphoserine.

The protein belongs to the metastasis-associated protein family. As to quaternary structure, component of the nucleosome remodeling and deacetylase (NuRD) repressor complex, composed of core proteins MTA1, MTA2, MTA3, RBBP4, RBBP7, HDAC1, HDAC2, MBD2, MBD3, and peripherally associated proteins CDK2AP1, CDK2AP2, GATAD2A, GATAD2B, CHD3, CHD4 and CHD5. The exact stoichiometry of the NuRD complex is unknown, and some subunits such as MBD2 and MBD3, GATAD2A and GATAD2B, and CHD3, CHD4 and CHD5 define mutually exclusive NuRD complexes. Interacts with BCL6. Interacts with NACC2. Interacts with PWWP2B. As to expression, expressed in germinal centers of lymphoid tissues. No expression in nonepithelial cells.

The protein resides in the nucleus. It is found in the cytoplasm. Functionally, acts as a component of the histone deacetylase NuRD complex which participates in the remodeling of chromatin. Plays a role in maintenance of the normal epithelial architecture through the repression of SNAI1 transcription in a histone deacetylase-dependent manner, and thus the regulation of E-cadherin levels. Contributes to transcriptional repression by BCL6. In Homo sapiens (Human), this protein is Metastasis-associated protein MTA3 (MTA3).